The sequence spans 91 residues: DNA-directed RNA polymerase subunit omega (91 aa).

Belongs to the RNA polymerase subunit omega family. The RNAP catalytic core consists of 2 alpha, 1 beta, 1 beta' and 1 omega subunit. When a sigma factor is associated with the core the holoenzyme is formed, which can initiate transcription.

The catalysed reaction is RNA(n) + a ribonucleoside 5'-triphosphate = RNA(n+1) + diphosphate. Promotes RNA polymerase assembly. Latches the N- and C-terminal regions of the beta' subunit thereby facilitating its interaction with the beta and alpha subunits. The polypeptide is DNA-directed RNA polymerase subunit omega (Serratia proteamaculans (strain 568)).